The chain runs to 421 residues: Glutamate-1-semialdehyde 2,1-aminomutase (421 aa).

N6-(pyridoxal phosphate)lysine is present on Lys-261.

The protein belongs to the class-III pyridoxal-phosphate-dependent aminotransferase family. HemL subfamily. It depends on pyridoxal 5'-phosphate as a cofactor.

The protein localises to the cytoplasm. It catalyses the reaction (S)-4-amino-5-oxopentanoate = 5-aminolevulinate. The protein operates within porphyrin-containing compound metabolism; protoporphyrin-IX biosynthesis; 5-aminolevulinate from L-glutamyl-tRNA(Glu): step 2/2. This chain is Glutamate-1-semialdehyde 2,1-aminomutase (hemL), found in Thermoplasma acidophilum (strain ATCC 25905 / DSM 1728 / JCM 9062 / NBRC 15155 / AMRC-C165).